Reading from the N-terminus, the 76-residue chain is Serine proteinase inhibitor IA-1 (76 aa).

Serine 1 bears the N-acetylserine mark.

It belongs to the protease inhibitor I9 family.

In terms of biological role, specifically inhibits an endogenous intracellular serine proteinase (proteinase A). This chain is Serine proteinase inhibitor IA-1, found in Pleurotus ostreatus (Oyster mushroom).